We begin with the raw amino-acid sequence, 406 residues long: Argininosuccinate synthase (406 aa).

Residue 9-17 (AYSGGLDTS) coordinates ATP. Residue Tyr-86 coordinates L-citrulline. Residue Gly-116 coordinates ATP. Thr-118, Asn-122, and Asp-123 together coordinate L-aspartate. Asn-122 contacts L-citrulline. The L-citrulline site is built by Arg-126, Ser-174, Ser-183, Glu-259, and Tyr-271.

The protein belongs to the argininosuccinate synthase family. Type 1 subfamily. In terms of assembly, homotetramer.

The protein localises to the cytoplasm. It catalyses the reaction L-citrulline + L-aspartate + ATP = 2-(N(omega)-L-arginino)succinate + AMP + diphosphate + H(+). It functions in the pathway amino-acid biosynthesis; L-arginine biosynthesis; L-arginine from L-ornithine and carbamoyl phosphate: step 2/3. The polypeptide is Argininosuccinate synthase (Geobacillus kaustophilus (strain HTA426)).